Consider the following 84-residue polypeptide: Large ribosomal subunit protein bL27 (84 aa).

Residues 1-22 (MAHKKAGGSTRNGRDSESKRLG) form a disordered region.

It belongs to the bacterial ribosomal protein bL27 family.

The polypeptide is Large ribosomal subunit protein bL27 (Shewanella woodyi (strain ATCC 51908 / MS32)).